Here is a 416-residue protein sequence, read N- to C-terminus: Serine hydroxymethyltransferase 1 (416 aa).

Residues leucine 121 and 125–127 contribute to the (6S)-5,6,7,8-tetrahydrofolate site; that span reads GHL. Lysine 229 bears the N6-(pyridoxal phosphate)lysine mark. (6S)-5,6,7,8-tetrahydrofolate-binding positions include glutamate 245 and 354–356; that span reads SPF.

Belongs to the SHMT family. As to quaternary structure, homodimer. The cofactor is pyridoxal 5'-phosphate.

Its subcellular location is the cytoplasm. It carries out the reaction (6R)-5,10-methylene-5,6,7,8-tetrahydrofolate + glycine + H2O = (6S)-5,6,7,8-tetrahydrofolate + L-serine. It functions in the pathway one-carbon metabolism; tetrahydrofolate interconversion. It participates in amino-acid biosynthesis; glycine biosynthesis; glycine from L-serine: step 1/1. Functionally, catalyzes the reversible interconversion of serine and glycine with tetrahydrofolate (THF) serving as the one-carbon carrier. This reaction serves as the major source of one-carbon groups required for the biosynthesis of purines, thymidylate, methionine, and other important biomolecules. Also exhibits THF-independent aldolase activity toward beta-hydroxyamino acids, producing glycine and aldehydes, via a retro-aldol mechanism. In Photobacterium profundum (strain SS9), this protein is Serine hydroxymethyltransferase 1.